A 259-amino-acid polypeptide reads, in one-letter code: PKHD-type hydroxylase PsycPRwf_1523 (259 aa).

Positions 80 to 180 (VIMPPLFSAY…RLAMVTWVQS (101 aa)) constitute a Fe2OG dioxygenase domain. Fe cation contacts are provided by His-98, Asp-100, and His-161. Arg-171 contributes to the 2-oxoglutarate binding site.

It depends on Fe(2+) as a cofactor. L-ascorbate serves as cofactor.

This Psychrobacter sp. (strain PRwf-1) protein is PKHD-type hydroxylase PsycPRwf_1523.